The following is a 201-amino-acid chain: Pyridoxal 5'-phosphate synthase subunit PdxT (201 aa).

Residue 48–50 coordinates L-glutamine; the sequence is GES. Catalysis depends on C80, which acts as the Nucleophile. L-glutamine contacts are provided by residues R109 and 137–138; that span reads IR. Catalysis depends on charge relay system residues H180 and E182.

Belongs to the glutaminase PdxT/SNO family. As to quaternary structure, in the presence of PdxS, forms a dodecamer of heterodimers. Only shows activity in the heterodimer.

It carries out the reaction aldehydo-D-ribose 5-phosphate + D-glyceraldehyde 3-phosphate + L-glutamine = pyridoxal 5'-phosphate + L-glutamate + phosphate + 3 H2O + H(+). It catalyses the reaction L-glutamine + H2O = L-glutamate + NH4(+). The protein operates within cofactor biosynthesis; pyridoxal 5'-phosphate biosynthesis. Catalyzes the hydrolysis of glutamine to glutamate and ammonia as part of the biosynthesis of pyridoxal 5'-phosphate. The resulting ammonia molecule is channeled to the active site of PdxS. This is Pyridoxal 5'-phosphate synthase subunit PdxT from Cutibacterium acnes (strain DSM 16379 / KPA171202) (Propionibacterium acnes).